Reading from the N-terminus, the 342-residue chain is CD2 antigen cytoplasmic tail-binding protein 2 (342 aa).

The interval 1-64 (MPKRKVTFQG…DEEGSSKYDI (64 aa)) is disordered. Residue Lys-26 forms a Glycyl lysine isopeptide (Lys-Gly) (interchain with G-Cter in SUMO2) linkage. N6-acetyllysine is present on Lys-44. 3 positions are modified to phosphoserine: Ser-46, Ser-49, and Ser-117. 2 disordered regions span residues 130-150 (RPPDKHQVSDSEEEDSLGQTP) and 177-200 (LGARGGGKGSNSKGTGRPNSPQRL). Ser-196 is modified (phosphoserine). In terms of domain architecture, GYF spans 281–339 (DVMWEYKWENTGDAELYGPFTSAQMQTWVSEGYFPDGVYCRKLDPPGGQFYNSKRIDFE).

As to quaternary structure, component of the U5 snRNP complex composed of the U5 snRNA and at least PRPF6, PRPF8, SNRNP200, EFTUD2, SNRNP40, DDX23, TXNL4A and CD2BP2. Interacts directly with TXNL4A and PRPF6. Interacts (via GYF domain) with CD2 (via Pro-rich sequence in the cytoplasmic domain). Interacts with PQBP1.

The protein resides in the cytoplasm. It localises to the nucleus. Its function is as follows. Involved in pre-mRNA splicing as component of the U5 snRNP complex that is involved in spliceosome assembly. The sequence is that of CD2 antigen cytoplasmic tail-binding protein 2 (Cd2bp2) from Mus musculus (Mouse).